Reading from the N-terminus, the 348-residue chain is Quinone oxidoreductase-like protein 1 (348 aa).

This sequence belongs to the zinc-containing alcohol dehydrogenase family. Quinone oxidoreductase subfamily. Component of the FERRY complex composed of five subunits, TBCK, PPP1R21, FERRY3, CRYZL1 and GATD1 with a ratio of 1:2:1:2:4, respectively.

It is found in the early endosome. Functionally, component of the FERRY complex (Five-subunit Endosomal Rab5 and RNA/ribosome intermediary). The FERRY complex directly interacts with mRNAs and RAB5A, and functions as a RAB5A effector involved in the localization and the distribution of specific mRNAs most likely by mediating their endosomal transport. The complex recruits mRNAs and ribosomes to early endosomes through direct mRNA-interaction. The protein is Quinone oxidoreductase-like protein 1 (Cryzl1) of Mus musculus (Mouse).